The chain runs to 126 residues: Fatty acid-binding protein, liver (126 aa).

Ala2 carries the N-acetylalanine modification.

It belongs to the calycin superfamily. Fatty-acid binding protein (FABP) family.

It is found in the cytoplasm. Its function is as follows. Binds free fatty acids and their coenzyme A derivatives, bilirubin, and some other small molecules in the cytoplasm. May be involved in intracellular lipid transport. The chain is Fatty acid-binding protein, liver (fabp1) from Schroederichthys bivius (Narrowmouthed catshark).